We begin with the raw amino-acid sequence, 157 residues long: SsrA-binding protein (157 aa).

Belongs to the SmpB family.

The protein resides in the cytoplasm. Required for rescue of stalled ribosomes mediated by trans-translation. Binds to transfer-messenger RNA (tmRNA), required for stable association of tmRNA with ribosomes. tmRNA and SmpB together mimic tRNA shape, replacing the anticodon stem-loop with SmpB. tmRNA is encoded by the ssrA gene; the 2 termini fold to resemble tRNA(Ala) and it encodes a 'tag peptide', a short internal open reading frame. During trans-translation Ala-aminoacylated tmRNA acts like a tRNA, entering the A-site of stalled ribosomes, displacing the stalled mRNA. The ribosome then switches to translate the ORF on the tmRNA; the nascent peptide is terminated with the 'tag peptide' encoded by the tmRNA and targeted for degradation. The ribosome is freed to recommence translation, which seems to be the essential function of trans-translation. This chain is SsrA-binding protein, found in Levilactobacillus brevis (strain ATCC 367 / BCRC 12310 / CIP 105137 / JCM 1170 / LMG 11437 / NCIMB 947 / NCTC 947) (Lactobacillus brevis).